The chain runs to 345 residues: Biotin synthase (345 aa).

Positions 60 to 287 constitute a Radical SAM core domain; the sequence is NQVQLSTLLS…RTMVRLSAGR (228 aa). The [4Fe-4S] cluster site is built by Cys75, Cys79, and Cys82. [2Fe-2S] cluster-binding residues include Cys119, Cys150, Cys210, and Arg282.

The protein belongs to the radical SAM superfamily. Biotin synthase family. As to quaternary structure, homodimer. [4Fe-4S] cluster is required as a cofactor. [2Fe-2S] cluster serves as cofactor.

The catalysed reaction is (4R,5S)-dethiobiotin + (sulfur carrier)-SH + 2 reduced [2Fe-2S]-[ferredoxin] + 2 S-adenosyl-L-methionine = (sulfur carrier)-H + biotin + 2 5'-deoxyadenosine + 2 L-methionine + 2 oxidized [2Fe-2S]-[ferredoxin]. Its pathway is cofactor biosynthesis; biotin biosynthesis; biotin from 7,8-diaminononanoate: step 2/2. In terms of biological role, catalyzes the conversion of dethiobiotin (DTB) to biotin by the insertion of a sulfur atom into dethiobiotin via a radical-based mechanism. This chain is Biotin synthase, found in Polaromonas naphthalenivorans (strain CJ2).